A 143-amino-acid polypeptide reads, in one-letter code: Transcriptional regulator MraZ (143 aa).

SpoVT-AbrB domains lie at 5 to 47 (TYTP…PRAE) and 76 to 119 (TDEQ…DAAA).

Belongs to the MraZ family. In terms of assembly, forms oligomers.

It localises to the cytoplasm. It is found in the nucleoid. In Mycobacterium sp. (strain JLS), this protein is Transcriptional regulator MraZ.